The chain runs to 121 residues: Small ribosomal subunit protein uS13 (121 aa).

The tract at residues 93–121 is disordered; that stretch reads RGLPMRGQRTRTNARTRKGPRKSAAALKK.

This sequence belongs to the universal ribosomal protein uS13 family. Part of the 30S ribosomal subunit. Forms a loose heterodimer with protein S19. Forms two bridges to the 50S subunit in the 70S ribosome.

Its function is as follows. Located at the top of the head of the 30S subunit, it contacts several helices of the 16S rRNA. In the 70S ribosome it contacts the 23S rRNA (bridge B1a) and protein L5 of the 50S subunit (bridge B1b), connecting the 2 subunits; these bridges are implicated in subunit movement. Contacts the tRNAs in the A and P-sites. The sequence is that of Small ribosomal subunit protein uS13 from Methylibium petroleiphilum (strain ATCC BAA-1232 / LMG 22953 / PM1).